Reading from the N-terminus, the 310-residue chain is Transcription factor LRL2 (310 aa).

2 stretches are compositionally biased toward low complexity: residues 1–20 and 104–126; these read MNSS…LQSP and QTQT…QPQT. Disordered regions lie at residues 1 to 23 and 95 to 143; these read MNSS…PATF and FHLP…PHSI. The tract at residues 136-149 is basic motif; degenerate; the sequence is QATDPHSIAERLRR. One can recognise a bHLH domain in the interval 136–185; it reads QATDPHSIAERLRRERIAERMKSLQELVPNGNKTDKASMLDEIIDYVKFL. Positions 150–185 are helix-loop-helix motif; it reads ERIAERMKSLQELVPNGNKTDKASMLDEIIDYVKFL. The tract at residues 203–225 is disordered; that stretch reads ASSQISEDAGGSHENTSSSGEAK.

As to quaternary structure, homodimer. Expressed constitutively in roots, leaves, stems, and flowers.

The protein localises to the nucleus. In terms of biological role, transcription factor that regulates the development of root hairs. Transcription factor that regulates the development of sperm cells. The chain is Transcription factor LRL2 from Arabidopsis thaliana (Mouse-ear cress).